The following is a 445-amino-acid chain: DNA primase DnaG (445 aa).

One can recognise a Toprim domain in the interval 166–252; sequence DAIVVVEGRS…SVEDLSRSEV (87 aa). 3 residues coordinate Mg(2+): Glu-172, Asp-214, and Asp-216. Residues 276–355 are disordered; sequence EEMSQAGEST…NGDGPTIPSL (80 aa). Residues 284-298 are compositionally biased toward low complexity; sequence STTADGGAVAAATSD. Residues 303 to 313 are compositionally biased toward polar residues; it reads NQPSPSSQTGS. Low complexity predominate over residues 324-337; sequence SVVDNSNATAVADA.

It belongs to the archaeal DnaG primase family. In terms of assembly, forms a ternary complex with MCM helicase and DNA. Requires Mg(2+) as cofactor.

The catalysed reaction is ssDNA + n NTP = ssDNA/pppN(pN)n-1 hybrid + (n-1) diphosphate.. Its function is as follows. RNA polymerase that catalyzes the synthesis of short RNA molecules used as primers for DNA polymerase during DNA replication. The chain is DNA primase DnaG from Haloarcula marismortui (strain ATCC 43049 / DSM 3752 / JCM 8966 / VKM B-1809) (Halobacterium marismortui).